A 194-amino-acid chain; its full sequence is Imidazoleglycerol-phosphate dehydratase (194 aa).

The protein belongs to the imidazoleglycerol-phosphate dehydratase family.

The protein resides in the cytoplasm. The catalysed reaction is D-erythro-1-(imidazol-4-yl)glycerol 3-phosphate = 3-(imidazol-4-yl)-2-oxopropyl phosphate + H2O. Its pathway is amino-acid biosynthesis; L-histidine biosynthesis; L-histidine from 5-phospho-alpha-D-ribose 1-diphosphate: step 6/9. This is Imidazoleglycerol-phosphate dehydratase from Limosilactobacillus fermentum (strain NBRC 3956 / LMG 18251) (Lactobacillus fermentum).